Consider the following 109-residue polypeptide: Large ribosomal subunit protein uL22 (109 aa).

This sequence belongs to the universal ribosomal protein uL22 family. In terms of assembly, part of the 50S ribosomal subunit.

This protein binds specifically to 23S rRNA; its binding is stimulated by other ribosomal proteins, e.g. L4, L17, and L20. It is important during the early stages of 50S assembly. It makes multiple contacts with different domains of the 23S rRNA in the assembled 50S subunit and ribosome. In terms of biological role, the globular domain of the protein is located near the polypeptide exit tunnel on the outside of the subunit, while an extended beta-hairpin is found that lines the wall of the exit tunnel in the center of the 70S ribosome. This chain is Large ribosomal subunit protein uL22, found in Dehalococcoides mccartyi (strain ATCC BAA-2100 / JCM 16839 / KCTC 5957 / BAV1).